Consider the following 38-residue polypeptide: Cytochrome b6-f complex subunit 5 (38 aa).

A helical membrane pass occupies residues 5 to 25 (LLLGIVLGLIPITLAGLFVAA).

This sequence belongs to the PetG family. In terms of assembly, the 4 large subunits of the cytochrome b6-f complex are cytochrome b6, subunit IV (17 kDa polypeptide, PetD), cytochrome f and the Rieske protein, while the 4 small subunits are PetG, PetL, PetM and PetN. The complex functions as a dimer.

The protein localises to the cellular thylakoid membrane. Functionally, component of the cytochrome b6-f complex, which mediates electron transfer between photosystem II (PSII) and photosystem I (PSI), cyclic electron flow around PSI, and state transitions. PetG is required for either the stability or assembly of the cytochrome b6-f complex. The protein is Cytochrome b6-f complex subunit 5 of Crocosphaera subtropica (strain ATCC 51142 / BH68) (Cyanothece sp. (strain ATCC 51142)).